We begin with the raw amino-acid sequence, 830 residues long: ABC transporter G family member STR (830 aa).

At 1 to 551 (MAKFKRTDTN…RTTLNVIRTP (551 aa)) the chain is on the cytoplasmic side. Residues 46 to 297 (LEFNNLSYSV…LAGFARPVPD (252 aa)) enclose the ABC transporter domain. Residue 90–97 (GPSGAGKS) participates in ATP binding. 3 disordered regions span residues 333–356 (DQAA…PYAK), 368–422 (SHFS…SMQS), and 471–491 (SMSS…NKTP). Polar residues predominate over residues 368–378 (SHFSTGNMNSQ). Over residues 395–405 (DYEDDDDEDEF) the composition is skewed to acidic residues. A compositionally biased stretch (low complexity) spans 471–483 (SMSSSQFSMTQQT). A helical membrane pass occupies residues 552 to 572 (ELFLSREIVLTVMGLVLSSFF). At 573 to 588 (KKLSHFDFKTINHLLN) the chain is on the extracellular side. The helical transmembrane segment at 589 to 609 (FYIFTICLVFFSSNDAVPTFI) threads the bilayer. Residues 610–630 (QERFIFIRETSHNAYRASSYV) are Cytoplasmic-facing. A helical membrane pass occupies residues 631–651 (ISSLIVYLPFFAIQGFTFAGI). The Extracellular segment spans residues 652 to 661 (TQYILHLNSS). A glycan (N-linked (GlcNAc...) asparagine) is linked at Asn-659. Residues 662 to 682 (ILSFWLILYSSLVTSNAYVML) form a helical membrane-spanning segment. At 683–690 (VSALVPSY) the chain is on the cytoplasmic side. Residues 691–711 (ITGYAVVIATTALFFLTCGFF) form a helical membrane-spanning segment. At 712–798 (LKRTQIPLVW…LFSMDIREEN (87 aa)) the chain is on the extracellular side. Residues Asn-771 and Asn-780 are each glycosylated (N-linked (GlcNAc...) asparagine). A helical membrane pass occupies residues 799–819 (IWLDIVILLAWGVLYRLFFYV). At 820–830 (VLRFYSKNERK) the chain is on the cytoplasmic side.

This sequence belongs to the ABC transporter superfamily. ABCG family. Stunted arbuscule (STR) subfamily. As to quaternary structure, heterodimerizes with STR2; the resulting transporter is located in the peri-arbuscular membrane.

It is found in the cell membrane. In terms of biological role, together with STR2, required for arbuscule development in arbuscular mycorrhizal (AM) symbiosis. This is ABC transporter G family member STR from Petunia hybrida (Petunia).